A 330-amino-acid polypeptide reads, in one-letter code: MKTAYIAKQRQISFVKSHFSRQLEEKLGLIEVQAPILSRVGDGTQDNLSGCEKAVQVKVKTLPDAQFEVVHSLAKWKRQTLGQHDFSAGEGLYTHMKALRPDEDRLTPIHSVYVDQWDWERVMGDEERHVGTLKATVEAIYAGIKATELAVSQEFGLKPFLPEQIHFVHSQELLSRYPDLDAKGRERAIAKELGAVFLIGIGGKLSNGKRHDVRAPDYDDWSTEVSEGFAGLNGDILVWNPVLEDAFEISSMGIRVDAEALKRQLAVTGDEDRLQLEWHQALLRGEMPQTIGGGIGQSRLTMLLLQLDHIGQVQCGVWPAQVRESVSALL.

This sequence belongs to the class-II aminoacyl-tRNA synthetase family. AsnA subfamily.

It is found in the cytoplasm. The enzyme catalyses L-aspartate + NH4(+) + ATP = L-asparagine + AMP + diphosphate + H(+). The protein operates within amino-acid biosynthesis; L-asparagine biosynthesis; L-asparagine from L-aspartate (ammonia route): step 1/1. This chain is Aspartate--ammonia ligase, found in Klebsiella pneumoniae (strain 342).